A 475-amino-acid polypeptide reads, in one-letter code: MNTALAQQIANEGGVEAWMIAQQHKSLLRFLTCGSVDDGKSTLIGRLLHDTRQIYEDQLSSLHNDSKRHGTQGEKLDLALLVDGLQAEREQGITIDVAYRYFSTEKRKFIIADTPGHEQYTRNMATGASTCELAILLIDARKGVLDQTRRHSFISTLLGIKHLVVAINKMDLMDYSEETFTRIREDYLTFAGQLPGNLDIRFVPLSALEGDNVASQSESMPWYSGPTLLEVLETVEIQRVVDAQPMRFPVQYVNRPNLDFRGYAGTLASGRVEVGQRVKVLPSGVESNVARIVTFDGDREEAFAGEAITLVLTDEIDISRGDLLLAADEALPAVQSASVDVVWMAEQPLSPGQSYDIKIAGKKTRARVDGIRYQVDINNLTQREVENLPLNGIGLVDLTFDEPLVLDRYQQNPVTGGLIFIDRLSNVTVGAGMVHEPVSQATAAPSEFSAFELELNALVRRHFPHWGARDLLGDK.

A tr-type G domain is found at 25–239; the sequence is KSLLRFLTCG…EVLETVEIQR (215 aa). The G1 stretch occupies residues 34 to 41; it reads GSVDDGKS. A GTP-binding site is contributed by 34–41; sequence GSVDDGKS. The segment at 92-96 is G2; that stretch reads GITID. The segment at 113 to 116 is G3; sequence DTPG. GTP is bound by residues 113 to 117 and 168 to 171; these read DTPGH and NKMD. The segment at 168-171 is G4; sequence NKMD. The interval 206 to 208 is G5; sequence SAL.

This sequence belongs to the TRAFAC class translation factor GTPase superfamily. Classic translation factor GTPase family. CysN/NodQ subfamily. As to quaternary structure, heterodimer composed of CysD, the smaller subunit, and CysN.

The enzyme catalyses sulfate + ATP + H(+) = adenosine 5'-phosphosulfate + diphosphate. It functions in the pathway sulfur metabolism; hydrogen sulfide biosynthesis; sulfite from sulfate: step 1/3. Its function is as follows. With CysD forms the ATP sulfurylase (ATPS) that catalyzes the adenylation of sulfate producing adenosine 5'-phosphosulfate (APS) and diphosphate, the first enzymatic step in sulfur assimilation pathway. APS synthesis involves the formation of a high-energy phosphoric-sulfuric acid anhydride bond driven by GTP hydrolysis by CysN coupled to ATP hydrolysis by CysD. In Shigella dysenteriae serotype 1 (strain Sd197), this protein is Sulfate adenylyltransferase subunit 1.